The sequence spans 91 residues: MHLARVTGAVVSTQKSPSLIGKKLLLVRRVSADGELPASPTSGDEVAVDSVGAGVGELVLLSGGSSARHVFSGPNEAIDLAVVGIVDTLSC.

Residues 1 to 87 (MHLARVTGAV…IDLAVVGIVD (87 aa)) form the BMV domain.

Belongs to the CcmL/EutN family. In terms of assembly, homopentamer. Interacts with shell protein PduA.

Its subcellular location is the bacterial microcompartment. It participates in polyol metabolism; 1,2-propanediol degradation. Probably forms vertices in the shell of the bacterial microcompartment (BMC) dedicated to 1,2-propanediol (1,2-PD) degradation. Required for structural integrity of BMCs and to mitigate propionaldehyde toxicity. Its function is as follows. The 1,2-PD-specific bacterial microcompartment (BMC) concentrates low levels of 1,2-PD catabolic enzymes, concentrates volatile reaction intermediates thus enhancing pathway flux and keeps the level of toxic, mutagenic propionaldehyde low. This Salmonella typhimurium (strain LT2 / SGSC1412 / ATCC 700720) protein is Bacterial microcompartment shell vertex protein PduN.